The sequence spans 1441 residues: Remodeling and spacing factor 1 (1441 aa).

Residues 17-84 (PGSCPNFAVV…MRKIGKSVTA (68 aa)) enclose the DDT domain. Residues K136 and K215 each participate in a glycyl lysine isopeptide (Lys-Gly) (interchain with G-Cter in SUMO2) cross-link. The span at 215–227 (KNSSQQDNSSRES) shows a compositional bias: polar residues. Positions 215 to 283 (KNSSQQDNSS…TTVKKEKEDE (69 aa)) are disordered. At S227 the chain carries Phosphoserine. Composition is skewed to basic and acidic residues over residues 234-257 (ETKK…KSEE) and 274-283 (TTVKKEKEDE). Residues K236, K243, K248, K252, and K254 each participate in a glycyl lysine isopeptide (Lys-Gly) (interchain with G-Cter in SUMO2) cross-link. K277 is covalently cross-linked (Glycyl lysine isopeptide (Lys-Gly) (interchain with G-Cter in SUMO1); alternate). K277 is covalently cross-linked (Glycyl lysine isopeptide (Lys-Gly) (interchain with G-Cter in SUMO2); alternate). Glycyl lysine isopeptide (Lys-Gly) (interchain with G-Cter in SUMO2) cross-links involve residues K284, K288, K294, K305, K306, K309, K323, K327, K337, K342, K358, K373, K381, and K390. Basic and acidic residues predominate over residues 330–340 (RADPKDTKSSM). The tract at residues 330-385 (RADPKDTKSSMEKPVAQEPERIEFGGNIKSSHEITEKSTEETEKLKNDQQAKIPLK) is disordered. The span at 359–378 (SSHEITEKSTEETEKLKNDQ) shows a compositional bias: basic and acidic residues. S392 and S397 each carry phosphoserine. Glycyl lysine isopeptide (Lys-Gly) (interchain with G-Cter in SUMO2) cross-links involve residues K400, K405, K415, and K419. Residue S429 is modified to Phosphoserine. K439 is covalently cross-linked (Glycyl lysine isopeptide (Lys-Gly) (interchain with G-Cter in SUMO2)). Residue K456 forms a Glycyl lysine isopeptide (Lys-Gly) (interchain with G-Cter in SUMO1); alternate linkage. Residue K456 forms a Glycyl lysine isopeptide (Lys-Gly) (interchain with G-Cter in SUMO2); alternate linkage. Residues K463 and K468 each participate in a glycyl lysine isopeptide (Lys-Gly) (interchain with G-Cter in SUMO2) cross-link. The segment covering 467-480 (TKEESYSPSKDRNI) has biased composition (basic and acidic residues). The disordered stretch occupies residues 467-634 (TKEESYSPSK…AAETSPPSNI (168 aa)). S473 carries the phosphoserine modification. The segment covering 482–498 (TEGNGTESLNSVITSMK) has biased composition (polar residues). K498 participates in a covalent cross-link: Glycyl lysine isopeptide (Lys-Gly) (interchain with G-Cter in SUMO2). The span at 500–514 (GELEKETAPLRKDAD) shows a compositional bias: basic and acidic residues. Phosphoserine is present on S524. Residues 552-562 (SKTALSSTESC) show a composition bias toward polar residues. K565 is covalently cross-linked (Glycyl lysine isopeptide (Lys-Gly) (interchain with G-Cter in SUMO2)). Residues 565 to 601 (KGEEKSPKTKKDKRPPILECLEKLEKSKKTFLDKDAQ) are compositionally biased toward basic and acidic residues. 2 positions are modified to phosphoserine: S570 and S604. Residues 609–621 (EVPKSTLESEKPG) are compositionally biased toward basic and acidic residues. Position 622 is a phosphoserine (S622). T628 bears the Phosphothreonine mark. S629 is modified (phosphoserine). Residues K662, K663, K670, K677, K698, and K709 each participate in a glycyl lysine isopeptide (Lys-Gly) (interchain with G-Cter in SUMO2) cross-link. A disordered region spans residues 675–887 (FTKVEMDNLD…EEKESEEAIL (213 aa)). S748 carries the phosphoserine modification. 3 stretches are compositionally biased toward basic and acidic residues: residues 753–770 (LEPE…EKTN), 789–802 (AEIR…KRGE), and 816–831 (KTDK…KDTN). Residues K758, K768, K795, and K799 each participate in a glycyl lysine isopeptide (Lys-Gly) (interchain with G-Cter in SUMO2) cross-link. The segment covering 864 to 873 (GSGSEKSSAA) has biased composition (low complexity). The segment covering 874 to 887 (SEEEEEKESEEAIL) has biased composition (acidic residues). S882 is modified (phosphoserine). A PHD-type zinc finger spans residues 891 to 941 (DEPCKKCGLPNHPELILLCDSCDSGYHTACLRPPLMIIPDGEWFCPPCQHK). Residues 942 to 1012 (LLCEKLEEQL…SKANLLERRS (71 aa)) are a coiled coil. The segment at 983 to 1007 (PPQEPDFSEDQEEKKKDSKKSKANL) is disordered. K1039 participates in a covalent cross-link: Glycyl lysine isopeptide (Lys-Gly) (interchain with G-Cter in SUMO2). K1050 is modified (N6-acetyllysine). A disordered region spans residues 1063-1428 (ISTILDEERK…EEEEDELLRV (366 aa)). Composition is skewed to acidic residues over residues 1094–1107 (LDSD…ESED) and 1120–1141 (VVSD…DSDT). Phosphoserine occurs at positions 1096, 1098, and 1105. Basic residues predominate over residues 1146–1169 (RRLRRHPSRPMRQSRRLRRKTPKK). Residues 1189 to 1199 (SDFSDDFSDDF) are compositionally biased toward acidic residues. Over residues 1203-1212 (RRRRSRRNQK) the composition is skewed to basic residues. Phosphoserine is present on residues S1221, S1223, and S1226. Residues 1229-1244 (SLRRGKEIRRVHKRRL) are compositionally biased toward basic residues. A phosphoserine mark is found at S1258 and S1277. A Phosphothreonine modification is found at T1278. Residues 1280–1292 (EYSEADEEEEEEE) are compositionally biased toward acidic residues. Residue T1305 is modified to Phosphothreonine. S1325 and S1336 each carry phosphoserine. Residues 1335–1344 (ESTKKPYRIE) show a composition bias toward basic and acidic residues. K1339 carries the N6-acetyllysine modification. Residues S1345, S1359, and S1375 each carry the phosphoserine modification. Over residues 1394–1408 (PKDNSTASASLASNG) the composition is skewed to polar residues.

As to quaternary structure, component of the RSF-1 ISWI chromatin-remodeling complex at least composed of SMARCA1 and RSF1. Within the RSF-1 ISWI chromatin-remodeling complex interacts with SMARCA1. Component of the RSF-5 ISWI chromatin-remodeling complex (also called the RSF complex) at least composed of SMARCA5/SNF2H and RSF1. Within the RSF-5 ISWI chromatin-remodeling complex interacts with SMARCA5/SNF2H; the interaction is direct. Identified in a centromere complex containing histones H2A, H2B and H4, and at least CENPA, CENPB, CENPC, CENPT, CENPN, HJURP, SUPT16H, SSRP1 and RSF1. Also binds the HBV pX/HBx protein, which is required to activate transcription of the viral genome. Post-translationally, phosphorylated. As to expression, ubiquitously expressed. Highly expressed in the heart, skeletal muscle, kidney and placenta. Expressed at low levels in the brain and colon.

It is found in the nucleus. In terms of biological role, regulatory subunit of the ATP-dependent RSF-1 and RSF-5 ISWI chromatin-remodeling complexes, which form ordered nucleosome arrays on chromatin and facilitate access to DNA during DNA-templated processes such as DNA replication, transcription, and repair. Binds to core histones together with SMARCA5, and is required for the assembly of regular nucleosome arrays by the RSF-5 ISWI chromatin-remodeling complex. Directly stimulates the ATPase activity of SMARCA1 and SMARCA5 in the RSF-1 and RSF-5 ISWI chromatin-remodeling complexes, respectively. The RSF-1 ISWI chromatin remodeling complex has a lower ATP hydrolysis rate than the RSF-5 ISWI chromatin-remodeling complex. The complexes do not have the ability to slide mononucleosomes to the center of a DNA template. Facilitates transcription of hepatitis B virus (HBV) genes by the pX transcription activator. In case of infection by HBV, together with pX, it represses TNF-alpha induced NF-kappa-B transcription activation. Represses transcription when artificially recruited to chromatin by fusion to a heterogeneous DNA binding domain. The chain is Remodeling and spacing factor 1 (RSF1) from Homo sapiens (Human).